We begin with the raw amino-acid sequence, 408 residues long: Tyrosine--tRNA ligase (408 aa).

Positions 46-55 (PTAPDLHVGH) match the 'HIGH' region motif. Residues 230 to 234 (KMSKS) carry the 'KMSKS' region motif. Residue lysine 233 participates in ATP binding. One can recognise an S4 RNA-binding domain in the interval 343-404 (VWICRLLTDA…GKRRFARIKF (62 aa)).

This sequence belongs to the class-I aminoacyl-tRNA synthetase family. TyrS type 2 subfamily. In terms of assembly, homodimer.

The protein localises to the cytoplasm. The enzyme catalyses tRNA(Tyr) + L-tyrosine + ATP = L-tyrosyl-tRNA(Tyr) + AMP + diphosphate + H(+). Functionally, catalyzes the attachment of tyrosine to tRNA(Tyr) in a two-step reaction: tyrosine is first activated by ATP to form Tyr-AMP and then transferred to the acceptor end of tRNA(Tyr). The polypeptide is Tyrosine--tRNA ligase (Syntrophotalea carbinolica (strain DSM 2380 / NBRC 103641 / GraBd1) (Pelobacter carbinolicus)).